A 368-amino-acid chain; its full sequence is 2-aminoethylphosphonate--pyruvate transaminase (368 aa).

The residue at position 192 (lysine 192) is an N6-(pyridoxal phosphate)lysine.

The protein belongs to the class-V pyridoxal-phosphate-dependent aminotransferase family. PhnW subfamily. Homodimer. Pyridoxal 5'-phosphate is required as a cofactor.

The enzyme catalyses (2-aminoethyl)phosphonate + pyruvate = phosphonoacetaldehyde + L-alanine. In terms of biological role, involved in phosphonate degradation. This is 2-aminoethylphosphonate--pyruvate transaminase from Pseudomonas putida (strain ATCC 700007 / DSM 6899 / JCM 31910 / BCRC 17059 / LMG 24140 / F1).